The chain runs to 357 residues: Mitogen-activated protein kinase HOG1 (357 aa).

In terms of domain architecture, Protein kinase spans 20–299 (YSDLQPVGMG…ATEALSHDYL (280 aa)). Residues 26 to 34 (VGMGAFGLV) and K49 each bind ATP. Residue D141 is the Proton acceptor of the active site. A Phosphothreonine modification is found at T171. Residues 171–173 (TGY) carry the TXY motif. Residue Y173 is modified to Phosphotyrosine.

Belongs to the protein kinase superfamily. Ser/Thr protein kinase family. MAP kinase subfamily. HOG1 sub-subfamily. Mg(2+) is required as a cofactor. In terms of processing, dually phosphorylated on Thr-171 and Tyr-173, which activates the enzyme.

It localises to the cytoplasm. The protein resides in the nucleus. It catalyses the reaction L-seryl-[protein] + ATP = O-phospho-L-seryl-[protein] + ADP + H(+). It carries out the reaction L-threonyl-[protein] + ATP = O-phospho-L-threonyl-[protein] + ADP + H(+). Activated by tyrosine and threonine phosphorylation. Proline-directed serine/threonine-protein kinase involved in a signal transduction pathway that is activated by changes in the osmolarity of the extracellular environment. Controls osmotic regulation of transcription of target genes. The protein is Mitogen-activated protein kinase HOG1 (HOG1) of Colletotrichum orbiculare (strain 104-T / ATCC 96160 / CBS 514.97 / LARS 414 / MAFF 240422) (Cucumber anthracnose fungus).